Here is a 276-residue protein sequence, read N- to C-terminus: Proteasome chaperone 1 (276 aa).

This sequence belongs to the PSMG1 family. Component of the 20S proteasome chaperone. Forms a heterodimer with ADD66 that binds to proteasome precursors.

The protein resides in the cytoplasm. Its function is as follows. Involved in 20S proteasome assembly. In Saccharomyces cerevisiae (strain ATCC 204508 / S288c) (Baker's yeast), this protein is Proteasome chaperone 1 (PBA1).